The sequence spans 226 residues: Exopolysaccharide production protein ExoY (226 aa).

Residues 34–54 form a helical membrane-spanning segment; sequence VLIAILALIALSPLFLLVMGL.

The protein belongs to the bacterial sugar transferase family.

The protein resides in the cell membrane. Its pathway is glycan metabolism; exopolysaccharide biosynthesis. Needed for the addition of the first sugar (galactose) to the isoprenoid carrier. May function as a sugar transferase. This chain is Exopolysaccharide production protein ExoY (exoY), found in Sinorhizobium fredii (strain NBRC 101917 / NGR234).